We begin with the raw amino-acid sequence, 110 residues long: MAEEQPQVELFVKAGSDGAKIGNCPFSQRLFMVLWLKGVTFNVTTVDTKRRTETVQKLCPGGQLPFLLYGTEVHTDTNKIEEFLEAVLCPPRYPKLAALNPESNTAGLDI.

An N-acetylalanine modification is found at Ala2. The tract at residues 2-90 (AEEQPQVELF…EEFLEAVLCP (89 aa)) is required for insertion into the membrane. An N6-acetyllysine modification is found at Lys13. A G-site motif is present at residues 24 to 27 (CPFS). The cysteines at positions 24 and 59 are disulfide-linked. A helical membrane pass occupies residues 26-46 (FSQRLFMVLWLKGVTFNVTTV).

This sequence belongs to the chloride channel CLIC family. As to quaternary structure, monomer. Homodimer (in vitro). Interacts with TRAPPC2. Dimerization requires a conformation change that leads to the exposure of a large hydrophobic surface. In vivo, this may lead to membrane insertion.

It localises to the nucleus. The protein resides in the nucleus membrane. It is found in the cytoplasm. Its subcellular location is the cell membrane. The protein localises to the endoplasmic reticulum. The catalysed reaction is L-dehydroascorbate + 2 glutathione = glutathione disulfide + L-ascorbate. It catalyses the reaction chloride(in) = chloride(out). It carries out the reaction iodide(out) = iodide(in). The enzyme catalyses thiocyanate(in) = thiocyanate(out). The catalysed reaction is nitrate(in) = nitrate(out). It catalyses the reaction bromide(in) = bromide(out). It carries out the reaction fluoride(in) = fluoride(out). Functionally, in the soluble state, catalyzes glutaredoxin-like thiol disulfide exchange reactions with reduced glutathione as electron donor. Reduces selenite and dehydroascorbate and may act as an antioxidant during oxidative stress response. Can insert into membranes and form voltage-dependent multi-ion conductive channels. Membrane insertion seems to be redox-regulated and may occur only under oxidizing conditions. Involved in regulation of the cell cycle. The chain is Chloride intracellular channel protein 1 (CLIC1) from Sus scrofa (Pig).